We begin with the raw amino-acid sequence, 874 residues long: Alanine--tRNA ligase (874 aa).

Zn(2+)-binding residues include H562, H566, C664, and H668.

The protein belongs to the class-II aminoacyl-tRNA synthetase family. Zn(2+) serves as cofactor.

Its subcellular location is the cytoplasm. It catalyses the reaction tRNA(Ala) + L-alanine + ATP = L-alanyl-tRNA(Ala) + AMP + diphosphate. Its function is as follows. Catalyzes the attachment of alanine to tRNA(Ala) in a two-step reaction: alanine is first activated by ATP to form Ala-AMP and then transferred to the acceptor end of tRNA(Ala). Also edits incorrectly charged Ser-tRNA(Ala) and Gly-tRNA(Ala) via its editing domain. The chain is Alanine--tRNA ligase from Shewanella sp. (strain MR-7).